The chain runs to 1030 residues: Calcium-transporting ATPase 4, plasma membrane-type (1030 aa).

Over methionine 1–serine 157 the chain is Cytoplasmic. Positions alanine 19 to valine 30 are interaction with calmodulin. The residue at position 28 (serine 28) is a Phosphoserine. Residues phenylalanine 158 to alanine 178 traverse the membrane as a helical segment. At valine 179–tyrosine 196 the chain is on the lumenal side. Residues aspartate 197 to tyrosine 217 form a helical membrane-spanning segment. At lysine 218–leucine 345 the chain is on the cytoplasmic side. Residues asparagine 346–valine 365 traverse the membrane as a helical segment. The Lumenal portion of the chain corresponds to valine 366 to tyrosine 395. Residues phenylalanine 396–leucine 413 form a helical membrane-spanning segment. Residues alanine 414 to isoleucine 804 lie on the Cytoplasmic side of the membrane. Aspartate 451 functions as the 4-aspartylphosphate intermediate in the catalytic mechanism. Residues aspartate 749 and aspartate 753 each contribute to the Mg(2+) site. Residues glutamine 805–phenylalanine 823 form a helical membrane-spanning segment. Residues valine 824–leucine 834 lie on the Lumenal side of the membrane. Residues threonine 835–alanine 855 traverse the membrane as a helical segment. The Cytoplasmic portion of the chain corresponds to threonine 856–phenylalanine 875. A helical membrane pass occupies residues isoleucine 876–leucine 898. The Lumenal segment spans residues asparagine 899–glycine 910. A helical transmembrane segment spans residues proline 911–asparagine 932. At glutamate 933–asparagine 950 the chain is on the cytoplasmic side. A helical membrane pass occupies residues serine 951–leucine 972. Residues glycine 973 to serine 982 lie on the Lumenal side of the membrane. The chain crosses the membrane as a helical span at residues tryptophan 983 to lysine 1004. The Cytoplasmic portion of the chain corresponds to cysteine 1005–alanine 1030.

It belongs to the cation transport ATPase (P-type) (TC 3.A.3) family. Type IIB subfamily.

The protein resides in the vacuole membrane. It carries out the reaction Ca(2+)(in) + ATP + H2O = Ca(2+)(out) + ADP + phosphate + H(+). Activated by calmodulin. Functionally, this magnesium-dependent enzyme catalyzes the hydrolysis of ATP coupled with the translocation of calcium from the cytosol into small vacuoles. This chain is Calcium-transporting ATPase 4, plasma membrane-type (ACA4), found in Arabidopsis thaliana (Mouse-ear cress).